We begin with the raw amino-acid sequence, 379 residues long: Cytochrome b (379 aa).

4 consecutive transmembrane segments (helical) span residues 32-52 (YGSL…VLAT), 76-98 (WLLR…LHIG), 111-131 (VWNI…LGYV), and 177-197 (FFAL…LHIF). Positions 82 and 96 each coordinate heme b. Positions 181 and 195 each coordinate heme b. His200 is an a ubiquinone binding site. Helical transmembrane passes span 223-243 (YSVK…VFTL), 287-304 (LGGV…FLFS), 320-340 (LARL…WLGS), and 348-367 (NEVA…TMCA).

It belongs to the cytochrome b family. In terms of assembly, the main subunits of complex b-c1 are: cytochrome b, cytochrome c1 and the Rieske protein. Heme b is required as a cofactor.

It is found in the mitochondrion inner membrane. Functionally, component of the ubiquinol-cytochrome c reductase complex (complex III or cytochrome b-c1 complex) that is part of the mitochondrial respiratory chain. The b-c1 complex mediates electron transfer from ubiquinol to cytochrome c. Contributes to the generation of a proton gradient across the mitochondrial membrane that is then used for ATP synthesis. This chain is Cytochrome b (mt:Cyt-b), found in Brachionus plicatilis (Marine rotifer).